Reading from the N-terminus, the 303-residue chain is GMP synthase [glutamine-hydrolyzing] subunit B (303 aa).

One can recognise a GMPS ATP-PPase domain in the interval 1–183 (MDVEKFVENA…LGLPKEISER (183 aa)). Position 28 to 34 (28 to 34 (SGGVDSS)) interacts with ATP.

In terms of assembly, heterodimer composed of a glutamine amidotransferase subunit (A) and a GMP-binding subunit (B).

The enzyme catalyses XMP + L-glutamine + ATP + H2O = GMP + L-glutamate + AMP + diphosphate + 2 H(+). Its pathway is purine metabolism; GMP biosynthesis; GMP from XMP (L-Gln route): step 1/1. Catalyzes the synthesis of GMP from XMP. The polypeptide is GMP synthase [glutamine-hydrolyzing] subunit B (guaAB) (Archaeoglobus fulgidus (strain ATCC 49558 / DSM 4304 / JCM 9628 / NBRC 100126 / VC-16)).